The sequence spans 306 residues: Small ribosomal subunit protein uS2 (306 aa).

The interval glutamate 257–alanine 306 is disordered. Over residues glutamate 275 to alanine 286 the composition is skewed to basic and acidic residues. Over residues glutamate 287–aspartate 300 the composition is skewed to low complexity.

Belongs to the universal ribosomal protein uS2 family.

In Streptomyces griseus subsp. griseus (strain JCM 4626 / CBS 651.72 / NBRC 13350 / KCC S-0626 / ISP 5235), this protein is Small ribosomal subunit protein uS2.